The chain runs to 339 residues: MEITLFDPIDAHLHVREDALLKAVLRYSSEPFSAAVIMPNLSKPLIDTPTTLEYEEEILKNSSNFKPLMSLYFNDGLTLEELQRAQEKGIRFLKLYPKGMTTNAQNGTSDLLGEKTLEILENAQKLGFILCIHAEQAGFCLDKEFLCHSVLETFALSFPKLKIIIEHLSDWRSIALIEKHTNLYATLTLHHISMTLDDLLGGSLNPHCFCKPLIKTKKDQERLLSLALKAHPKISFGSDSAPHFVSKKHSASIPAGIFSAPILLPALCELFEKHNALENLQAFISDNAKKIYTLDNLPNKKARLSKKPFIVPTHTICLNEKIAILRGGETLSWNLQEIA.

2 residues coordinate Zn(2+): H12 and H14. Substrate contacts are provided by residues 14-16 (HVR) and N40. Zn(2+)-binding residues include K94, H133, H167, and D239. The residue at position 94 (K94) is an N6-carboxylysine. A substrate-binding site is contributed by H133. D239 is an active-site residue. Substrate contacts are provided by H243 and A255.

This sequence belongs to the metallo-dependent hydrolases superfamily. DHOase family. Class II DHOase subfamily. In terms of assembly, homodimer. Requires Zn(2+) as cofactor.

The catalysed reaction is (S)-dihydroorotate + H2O = N-carbamoyl-L-aspartate + H(+). Its pathway is pyrimidine metabolism; UMP biosynthesis via de novo pathway; (S)-dihydroorotate from bicarbonate: step 3/3. Catalyzes the reversible cyclization of carbamoyl aspartate to dihydroorotate. This Helicobacter pylori (strain G27) protein is Dihydroorotase.